A 134-amino-acid chain; its full sequence is Methylglyoxal synthase (134 aa).

Residues 1–134 (MVNLNIALIA…GLLEWRNAVK (134 aa)) form the MGS-like domain. Residues H11, K15, and 37–40 (TGAT) contribute to the substrate site. D63 functions as the Proton donor/acceptor in the catalytic mechanism. H90 contacts substrate.

This sequence belongs to the methylglyoxal synthase family.

The catalysed reaction is dihydroxyacetone phosphate = methylglyoxal + phosphate. In terms of biological role, catalyzes the formation of methylglyoxal from dihydroxyacetone phosphate. The protein is Methylglyoxal synthase of Thermoanaerobacterium thermosaccharolyticum (Clostridium thermosaccharolyticum).